Reading from the N-terminus, the 363-residue chain is Mitogen-activated protein kinase 4 (363 aa).

The 289-residue stretch at 30–318 (YDLVKVVGFG…AKQVMEHPYF (289 aa)) folds into the Protein kinase domain. Residues 36-44 (VGFGACGTV) and Lys-59 each bind ATP. Asp-156 functions as the Proton acceptor in the catalytic mechanism. Ser-186 and Ser-187 each carry phosphoserine. Thr-190 is subject to Phosphothreonine; by MKK5. Positions 190-192 (TQY) match the TQY motif. At Tyr-192 the chain carries Phosphotyrosine; by MKK5.

The protein belongs to the protein kinase superfamily. CMGC Ser/Thr protein kinase family. MAP kinase subfamily. Mg(2+) is required as a cofactor. Post-translationally, dually phosphorylated on Thr-190 and Tyr-192, which activates the enzyme.

It catalyses the reaction L-seryl-[protein] + ATP = O-phospho-L-seryl-[protein] + ADP + H(+). It carries out the reaction L-threonyl-[protein] + ATP = O-phospho-L-threonyl-[protein] + ADP + H(+). Its function is as follows. Essential for the two main proliferating life stages, the promastigotes and amastigotes, of the parasite. This is Mitogen-activated protein kinase 4 from Leishmania mexicana.